The following is a 408-amino-acid chain: Acetate kinase (408 aa).

Mg(2+) is bound at residue N7. ATP is bound at residue K14. R91 lines the substrate pocket. Catalysis depends on D148, which acts as the Proton donor/acceptor. ATP-binding positions include 208–212 (HLGNG), 283–285 (DFR), and 331–335 (GIGEN). E384 serves as a coordination point for Mg(2+).

The protein belongs to the acetokinase family. As to quaternary structure, homodimer. Requires Mg(2+) as cofactor. Mn(2+) is required as a cofactor.

The protein localises to the cytoplasm. The enzyme catalyses acetate + ATP = acetyl phosphate + ADP. Its pathway is metabolic intermediate biosynthesis; acetyl-CoA biosynthesis; acetyl-CoA from acetate: step 1/2. In terms of biological role, catalyzes the formation of acetyl phosphate from acetate and ATP. Can also catalyze the reverse reaction. This Methanosarcina mazei (strain ATCC BAA-159 / DSM 3647 / Goe1 / Go1 / JCM 11833 / OCM 88) (Methanosarcina frisia) protein is Acetate kinase.